Consider the following 334-residue polypeptide: Probable tRNA pseudouridine synthase B (334 aa).

Residue aspartate 82 is the Nucleophile of the active site. The PUA domain maps to 250-325 (LPKVWIRDSA…IAVDVDKVFM (76 aa)).

Belongs to the pseudouridine synthase TruB family. Type 2 subfamily.

The catalysed reaction is uridine(55) in tRNA = pseudouridine(55) in tRNA. Could be responsible for synthesis of pseudouridine from uracil-55 in the psi GC loop of transfer RNAs. The protein is Probable tRNA pseudouridine synthase B of Thermococcus gammatolerans (strain DSM 15229 / JCM 11827 / EJ3).